The primary structure comprises 682 residues: Protein asunder (682 aa).

A coiled-coil region spans residues 517–570; that stretch reads NGARLKLSKAKDQYRLLYRELEQLIHLNATTVHHKNLLESLQSLRAAYGEAKSE. Polar residues predominate over residues 571-583; sequence PNSSLLRSYTESP. Residues 571-612 form a disordered region; sequence PNSSLLRSYTESPHSPERLEPIPSGGSSGSNSNSLLKASKRR. Positions 606-612 match the Nuclear localization signal (NLS) motif; the sequence is LKASKRR.

It belongs to the Integrator subunit 13 family. As to quaternary structure, belongs to the multiprotein complex Integrator, at least composed of IntS1, IntS2, IntS3, IntS4, omd/IntS5, IntS6, defl/IntS7, IntS8, IntS9, IntS10, IntS11, IntS12, asun/IntS13, IntS14 and IntS15. The core complex associates with protein phosphatase 2A subunits mts/PP2A and Pp2A-29B, to form the Integrator-PP2A (INTAC) complex. Phosphorylated.

The protein resides in the nucleus. It is found in the cytoplasm. Its subcellular location is the perinuclear region. Component of the integrator complex, a multiprotein complex that terminates RNA polymerase II (Pol II) transcription in the promoter-proximal region of genes. The integrator complex provides a quality checkpoint during transcription elongation by driving premature transcription termination of transcripts that are unfavorably configured for transcriptional elongation: the complex terminates transcription by (1) catalyzing dephosphorylation of the C-terminal domain (CTD) of Pol II subunit Polr2A/Rbp1 and Spt5, and (2) degrading the exiting nascent RNA transcript via endonuclease activity. The integrator complex is also involved in the 3'-end processing of the U7 snRNA, and also the spliceosomal snRNAs U1, U2, U4 and U5. The sequence is that of Protein asunder (asun) from Drosophila ananassae (Fruit fly).